We begin with the raw amino-acid sequence, 59 residues long: Potassium channel toxin alpha-KTx 3.5 (59 aa).

The first 22 residues, 1–22, serve as a signal peptide directing secretion; that stretch reads MKVFSAVLIILFVCSMIIGINA. 3 disulfides stabilise this stretch: cysteine 29–cysteine 49, cysteine 35–cysteine 54, and cysteine 39–cysteine 56. Residues 47 to 54 are interaction with Ca(2+)-activated K(+) channels; the sequence is GKCMNGKC.

Belongs to the short scorpion toxin superfamily. Potassium channel inhibitor family. Alpha-KTx 03 subfamily. In terms of tissue distribution, expressed by the venom gland.

It localises to the secreted. In terms of biological role, has also been shown to inhibit with high potency Kv1.3/KCNA3 and with low potency Kv1.1/KCNA1 and Kv1.2/KCNA2 voltage-gated potassium channels. Also binds and inhibits the molluscan calcium-activated potassium channels KCa (Kd=135 nM). This is Potassium channel toxin alpha-KTx 3.5 (KTX2) from Androctonus australis (Sahara scorpion).